Reading from the N-terminus, the 314-residue chain is ATP synthase gamma chain (314 aa).

This sequence belongs to the ATPase gamma chain family. As to quaternary structure, F-type ATPases have 2 components, CF(1) - the catalytic core - and CF(0) - the membrane proton channel. CF(1) has five subunits: alpha(3), beta(3), gamma(1), delta(1), epsilon(1). CF(0) has three main subunits: a, b and c.

Its subcellular location is the cellular thylakoid membrane. Its function is as follows. Produces ATP from ADP in the presence of a proton gradient across the membrane. The gamma chain is believed to be important in regulating ATPase activity and the flow of protons through the CF(0) complex. This Synechocystis sp. (strain ATCC 27184 / PCC 6803 / Kazusa) protein is ATP synthase gamma chain.